Consider the following 192-residue polypeptide: Fe/S biogenesis protein NfuA (192 aa).

The [4Fe-4S] cluster site is built by Cys149 and Cys152.

This sequence belongs to the NfuA family. Homodimer. It depends on [4Fe-4S] cluster as a cofactor.

Functionally, involved in iron-sulfur cluster biogenesis. Binds a 4Fe-4S cluster, can transfer this cluster to apoproteins, and thereby intervenes in the maturation of Fe/S proteins. Could also act as a scaffold/chaperone for damaged Fe/S proteins. This chain is Fe/S biogenesis protein NfuA, found in Colwellia psychrerythraea (strain 34H / ATCC BAA-681) (Vibrio psychroerythus).